The sequence spans 185 residues: Elongation factor P (185 aa).

Belongs to the elongation factor P family.

It is found in the cytoplasm. It functions in the pathway protein biosynthesis; polypeptide chain elongation. Involved in peptide bond synthesis. Stimulates efficient translation and peptide-bond synthesis on native or reconstituted 70S ribosomes in vitro. Probably functions indirectly by altering the affinity of the ribosome for aminoacyl-tRNA, thus increasing their reactivity as acceptors for peptidyl transferase. The chain is Elongation factor P from Burkholderia cenocepacia (strain HI2424).